The chain runs to 429 residues: Enolase (429 aa).

Residue glutamine 163 coordinates (2R)-2-phosphoglycerate. Glutamate 205 acts as the Proton donor in catalysis. Residues aspartate 242, glutamate 286, and aspartate 313 each coordinate Mg(2+). (2R)-2-phosphoglycerate contacts are provided by lysine 338, arginine 367, serine 368, and lysine 389. Lysine 338 functions as the Proton acceptor in the catalytic mechanism.

This sequence belongs to the enolase family. The cofactor is Mg(2+).

The protein resides in the cytoplasm. It localises to the secreted. It is found in the cell surface. It catalyses the reaction (2R)-2-phosphoglycerate = phosphoenolpyruvate + H2O. It participates in carbohydrate degradation; glycolysis; pyruvate from D-glyceraldehyde 3-phosphate: step 4/5. Catalyzes the reversible conversion of 2-phosphoglycerate (2-PG) into phosphoenolpyruvate (PEP). It is essential for the degradation of carbohydrates via glycolysis. The sequence is that of Enolase from Pelobacter propionicus (strain DSM 2379 / NBRC 103807 / OttBd1).